Here is an 898-residue protein sequence, read N- to C-terminus: Fasciclin-2 (898 aa).

The first 22 residues, 1–22, serve as a signal peptide directing secretion; that stretch reads MRTVACAVLLACFMGCLAGAWA. The Extracellular segment spans residues 23 to 764; it reads QSAGLEILPN…EDGSEGQMSS (742 aa). Ig-like C2-type domains are found at residues 31–124, 134–219, 226–316, 321–423, and 428–525; these read PNSE…KQLS, PITW…RPIR, PQMS…VEVT, PRIG…GHLM, and PSFA…IMLR. N-linked (GlcNAc...) asparagine glycans are attached at residues Asn-35, Asn-51, Asn-149, Asn-192, Asn-297, and Asn-328. Cys-48 and Cys-113 are oxidised to a cystine. 2 cysteine pairs are disulfide-bonded: Cys-156-Cys-203 and Cys-248-Cys-300. A disulfide bond links Cys-343 and Cys-407. N-linked (GlcNAc...) asparagine glycans are attached at residues Asn-447, Asn-457, and Asn-580. Cys-450 and Cys-509 form a disulfide bridge. Fibronectin type-III domains follow at residues 532-626 and 644-745; these read AVLQ…TPRI and GTEN…VKDP. The chain crosses the membrane as a helical span at residues 765–782; that stretch reads AAIVVLVVAALLLALLVV. The Cytoplasmic portion of the chain corresponds to 783–898; it reads DLVCCLVWRG…TSFVGKDSAV (116 aa).

The protein resides in the membrane. Its function is as follows. Neuronal recognition molecule. Involved in a pathway recognition for axons during the development of nerve fascicles. In Schistocerca americana (American grasshopper), this protein is Fasciclin-2 (FAS2).